Consider the following 263-residue polypeptide: uncharacterized protein (263 aa).

ATP is bound at residue 16–23 (AKGGTGKT).

To M.jannaschii MJ0547 and MJ0169.

This is an uncharacterized protein from Methanocaldococcus jannaschii (strain ATCC 43067 / DSM 2661 / JAL-1 / JCM 10045 / NBRC 100440) (Methanococcus jannaschii).